Consider the following 417-residue polypeptide: NADH-quinone oxidoreductase subunit D (417 aa).

This sequence belongs to the complex I 49 kDa subunit family. As to quaternary structure, NDH-1 is composed of 14 different subunits. Subunits NuoB, C, D, E, F, and G constitute the peripheral sector of the complex.

The protein resides in the cell inner membrane. It carries out the reaction a quinone + NADH + 5 H(+)(in) = a quinol + NAD(+) + 4 H(+)(out). Its function is as follows. NDH-1 shuttles electrons from NADH, via FMN and iron-sulfur (Fe-S) centers, to quinones in the respiratory chain. The immediate electron acceptor for the enzyme in this species is believed to be ubiquinone. Couples the redox reaction to proton translocation (for every two electrons transferred, four hydrogen ions are translocated across the cytoplasmic membrane), and thus conserves the redox energy in a proton gradient. This is NADH-quinone oxidoreductase subunit D from Coxiella burnetii (strain RSA 331 / Henzerling II).